The sequence spans 505 residues: RNA-splicing ligase RtcB homolog (505 aa).

The Mn(2+) site is built by Asp-119, Cys-122, His-227, His-259, and His-353. 226-230 is a GMP binding site; the sequence is NHYAE. Residues 353–354, 402–405, Ser-409, 428–431, and Lys-504 contribute to the GMP site; these read HN, GGTM, and HGAG. Catalysis depends on His-428, which acts as the GMP-histidine intermediate.

Belongs to the RtcB family. In terms of assembly, catalytic component of the tRNA-splicing ligase complex. Mn(2+) serves as cofactor.

It localises to the nucleus. It is found in the cytoplasm. It carries out the reaction a 3'-end 3'-phospho-ribonucleotide-RNA + a 5'-end dephospho-ribonucleoside-RNA + GTP = a ribonucleotidyl-ribonucleotide-RNA + GMP + diphosphate. The enzyme catalyses a 3'-end 2',3'-cyclophospho-ribonucleotide-RNA + a 5'-end dephospho-ribonucleoside-RNA + GTP + H2O = a ribonucleotidyl-ribonucleotide-RNA + GMP + diphosphate + H(+). Its function is as follows. Catalytic subunit of the tRNA-splicing ligase complex that acts by directly joining spliced tRNA halves to mature-sized tRNAs by incorporating the precursor-derived splice junction phosphate into the mature tRNA as a canonical 3',5'-phosphodiester. May act as an RNA ligase with broad substrate specificity, and may function toward other RNAs. This chain is RNA-splicing ligase RtcB homolog, found in Danio rerio (Zebrafish).